A 105-amino-acid chain; its full sequence is uncharacterized protein (105 aa).

3 consecutive transmembrane segments (helical) span residues 14 to 34 (ILLMLRLAVTAVAVFLAIVAW), 41 to 61 (ETVCFIAGVLCMYLAQLFAFL), and 80 to 100 (VGFTLELLPLACFIASLIFTI).

It localises to the cell membrane. This is an uncharacterized protein from Treponema pallidum (strain Nichols).